The sequence spans 206 residues: uncharacterized protein (206 aa).

A signal peptide spans 1-17 (MKGKILFALFLSAGVIA). Cys-18 carries N-palmitoyl cysteine lipidation. Cys-18 is lipidated: S-diacylglycerol cysteine. Positions 21 to 58 (ASQAAKQQEVKVAKAETKTKKKESKAEKFRKALAAQDK) form a coiled coil. Residues 97–201 (GDWRKGESLA…DIVAYLHDPE (105 aa)) form the Cytochrome c domain. Positions 127, 130, and 131 each coordinate heme c.

It localises to the cell membrane. This is an uncharacterized protein from Aquifex aeolicus (strain VF5).